The following is a 142-amino-acid chain: 3-hydroxyacyl-[acyl-carrier-protein] dehydratase FabZ (142 aa).

Histidine 50 is an active-site residue.

The protein belongs to the thioester dehydratase family. FabZ subfamily.

The protein resides in the cytoplasm. It catalyses the reaction a (3R)-hydroxyacyl-[ACP] = a (2E)-enoyl-[ACP] + H2O. In terms of biological role, involved in unsaturated fatty acids biosynthesis. Catalyzes the dehydration of short chain beta-hydroxyacyl-ACPs and long chain saturated and unsaturated beta-hydroxyacyl-ACPs. This Clostridium botulinum (strain Alaska E43 / Type E3) protein is 3-hydroxyacyl-[acyl-carrier-protein] dehydratase FabZ.